A 370-amino-acid chain; its full sequence is Glutamate 5-kinase (370 aa).

Residue Lys13 participates in ATP binding. The substrate site is built by Ser52, Asp139, and Asn151. ATP contacts are provided by residues 171–172 and 211–217; these read SD and SGGMKSK. Residues 275–353 enclose the PUA domain; sequence KGELVLDRGA…AEIEAVLGYR (79 aa).

Belongs to the glutamate 5-kinase family.

The protein resides in the cytoplasm. The catalysed reaction is L-glutamate + ATP = L-glutamyl 5-phosphate + ADP. Its pathway is amino-acid biosynthesis; L-proline biosynthesis; L-glutamate 5-semialdehyde from L-glutamate: step 1/2. Catalyzes the transfer of a phosphate group to glutamate to form L-glutamate 5-phosphate. This chain is Glutamate 5-kinase, found in Thermus thermophilus (strain ATCC BAA-163 / DSM 7039 / HB27).